Here is a 779-residue protein sequence, read N- to C-terminus: Protein zer-1 homolog (779 aa).

A2 is modified (N-acetylalanine). LRR repeat units follow at residues 226–245 (SLVLYNMDLSDDHIRVIVQL), 246–281 (HKLRSKILTCGPHLISSHLDISRDRLSSYYKFKLTR), and 291–315 (LGNLMSLDISGHMILENCSISKTDE). ARM repeat units follow at residues 440 to 480 (RSEQ…NFSI), 524 to 569 (DNDH…NITD), 571 to 613 (TPDN…NVAE), 615 to 656 (KELR…HIMF), and 727 to 769 (PDKY…HCSN).

Belongs to the zyg-11 family. As to quaternary structure, interacts with the ELOC-ELOB/Elongin BC complex. Part of an E3 ubiquitin ligase complex including ZER1, CUL2 and Elongin BC.

Its function is as follows. Serves as substrate adapter subunit in the E3 ubiquitin ligase complex ZYG11B-CUL2-Elongin BC. Acts redudantly with ZYG11B to target substrates bearing N-terminal glycine degrons for proteasomal degradation. Involved in the clearance of proteolytic fragments generated by caspase cleavage during apoptosis since N-terminal glycine degrons are strongly enriched at caspase cleavage sites. Also important in the quality control of protein N-myristoylation in which N-terminal glycine degrons are conditionally exposed after a failure of N-myristoylation. The polypeptide is Protein zer-1 homolog (Mus musculus (Mouse)).